Here is a 337-residue protein sequence, read N- to C-terminus: Protein-arginine kinase (337 aa).

The 229-residue stretch at 12-240 (IVIASKVKIL…NKLILREKNQ (229 aa)) folds into the Phosphagen kinase C-terminal domain. ATP contacts are provided by residues 15–19 (ASKVK), 162–166 (RTKVF), and 193–198 (KSIYNS).

Belongs to the ATP:guanido phosphotransferase family.

It catalyses the reaction L-arginyl-[protein] + ATP = N(omega)-phospho-L-arginyl-[protein] + ADP + H(+). Functionally, catalyzes the specific phosphorylation of arginine residues in proteins. This Clostridium perfringens (strain 13 / Type A) protein is Protein-arginine kinase.